The chain runs to 76 residues: uncharacterized protein (76 aa).

The region spanning 15-69 (VRIVRKEQNLRQDELAGVAGVGLRFIVDLEAGKPTAQIGKVLQVLQTLGCSIDIL) is the HTH cro/C1-type domain. Positions 26–45 (QDELAGVAGVGLRFIVDLEA) form a DNA-binding region, H-T-H motif.

This is an uncharacterized protein from Sinorhizobium fredii (strain NBRC 101917 / NGR234).